Reading from the N-terminus, the 444-residue chain is Elongation factor 1-alpha (444 aa).

The tr-type G domain occupies 15-238 (KPHINLAVVG…DSFQPPQRPV (224 aa)). The tract at residues 24 to 31 (GHVDNGKS) is G1. 24–31 (GHVDNGKS) serves as a coordination point for GTP. Ser-31 is a Mg(2+) binding site. The interval 80-84 (GVTIE) is G2. The segment at 101 to 104 (DLPG) is G3. Residues 101–105 (DLPGH) and 163–166 (NKMD) each bind GTP. The G4 stretch occupies residues 163–166 (NKMD). The tract at residues 202–204 (SAI) is G5.

Belongs to the TRAFAC class translation factor GTPase superfamily. Classic translation factor GTPase family. EF-Tu/EF-1A subfamily.

Its subcellular location is the cytoplasm. It carries out the reaction GTP + H2O = GDP + phosphate + H(+). GTP hydrolase that promotes the GTP-dependent binding of aminoacyl-tRNA to the A-site of ribosomes during protein biosynthesis. The protein is Elongation factor 1-alpha of Pyrobaculum aerophilum (strain ATCC 51768 / DSM 7523 / JCM 9630 / CIP 104966 / NBRC 100827 / IM2).